The sequence spans 1411 residues: Zinc finger protein 609 (1411 aa).

Disordered stretches follow at residues 1–26 (MSLSSGASGGKGVDANPVETYDSGDE), 47–190 (QKLE…QPVP), 353–484 (PRFC…EPTV), 517–659 (AHAH…ARPI), 679–963 (ASPG…VIQQ), 1005–1125 (YEEQ…RQAE), 1153–1221 (KSED…LTQH), and 1270–1367 (GSKV…STHH). Residues S358, S361, and S379 each carry the phosphoserine modification. The segment covering 377 to 401 (PNSNTPVNETATASDSKGTSNSSKT) has biased composition (polar residues). At T381 the chain carries Phosphothreonine. S413, S433, S446, S452, S467, and S470 each carry phosphoserine. The segment covering 423–437 (ASSTSEDVKASPSSA) has biased composition (polar residues). A Glycyl lysine isopeptide (Lys-Gly) (interchain with G-Cter in SUMO2) cross-link involves residue K479. The segment at 495-520 (IDCPHPNCNKKYKHINGLKYHQAHAH) adopts a C2H2-type zinc-finger fold. The segment covering 519 to 529 (AHTDDDSKPEA) has biased composition (basic and acidic residues). S533 carries the post-translational modification Phosphoserine. Residues 549–563 (NGASVSQKGSLSPAR) are compositionally biased toward polar residues. Residues S576 and S578 each carry the phosphoserine modification. Residues 626 to 649 (SLERKCMEKEKCKKPSSLKPEKIP) are compositionally biased toward basic and acidic residues. The span at 679–700 (ASPGSSSGLTATVAQAMPNSPQ) shows a compositional bias: polar residues. Basic residues predominate over residues 726-736 (DKKKKDKKKKE). The residue at position 743 (S743) is a Phosphoserine. T746 is subject to Phosphothreonine. Positions 751 to 764 (CRAEEGKSPFRESS) are enriched in basic and acidic residues. Phosphoserine is present on S758. Residue K789 forms a Glycyl lysine isopeptide (Lys-Gly) (interchain with G-Cter in SUMO2) linkage. The span at 798–844 (FTDNAPSPSIGGSSRLENTTPTQPLTPLHVVTQNGAEASSVKTNSPA) shows a compositional bias: polar residues. S804 is subject to Phosphoserine. T823 is subject to Phosphothreonine. Phosphoserine occurs at positions 842, 846, and 849. The segment covering 855–876 (GEGKVDSVKSKDAEQLVKEGAK) has biased composition (basic and acidic residues). Positions 897 to 908 (SYYSPSYAQSSP) are enriched in low complexity. Positions 926-950 (TKRDEEPESIEGKVKNDICEEKKPE) are enriched in basic and acidic residues. The span at 952-963 (SSSSQQPSVIQQ) shows a compositional bias: low complexity. The segment covering 1020-1042 (GVDKKAEMGLKEREAALKEEWKQ) has biased composition (basic and acidic residues). Residue S1055 is modified to Phosphoserine. A Glycyl lysine isopeptide (Lys-Gly) (interchain with G-Cter in SUMO2) cross-link involves residue K1061. Composition is skewed to basic and acidic residues over residues 1097-1113 (LKVKLSDASHLSKEASE), 1153-1187 (KSEDERWKEERDRKLKEERSRSKDSVPKEDGKEST), and 1195-1208 (TSEESRLGSKEPRP). Residue K1153 forms a Glycyl lysine isopeptide (Lys-Gly) (interchain with G-Cter in SUMO2) linkage. Over residues 1286-1296 (PSVTCKSSSES) the composition is skewed to polar residues. K1297 participates in a covalent cross-link: Glycyl lysine isopeptide (Lys-Gly) (interchain with G-Cter in SUMO2). Residues 1328 to 1337 (GCGVVGGGGS) are compositionally biased toward gly residues.

Interacts (via N-terminus) with NIPBL. Interacts with INTS13; promoting association with the integrator complex. Isoform 1: Expressed in myoblasts and myotubes. Isoform 2: Expressed in myoblasts and myotubes, with a preference in undifferentiated myoblasts.

It is found in the nucleus. Transcription factor, which activates RAG1, and possibly RAG2, transcription. Through the regulation of RAG1/2 expression, may regulate thymocyte maturation. Along with NIPBL and the multiprotein complex Integrator, promotes cortical neuron migration during brain development by regulating the transcription of crucial genes in this process. Preferentially binds promoters containing paused RNA polymerase II. Up-regulates the expression of SEMA3A, NRP1, PLXND1 and GABBR2 genes, among others. In terms of biological role, involved in the regulation of myoblast proliferation during myogenesis. The protein is Zinc finger protein 609 of Homo sapiens (Human).